Consider the following 461-residue polypeptide: Putative ankyrin repeat protein FPV218 (461 aa).

ANK repeat units follow at residues 1-28, 31-61, 65-94, 96-116, 120-149, 153-182, 186-213, 217-248, 250-277, 281-312, 358-385, and 431-460; these read MLSL…HPDS, KGFY…NPNN, ETVS…DTSL, PLYV…DVNV, ESRS…NVNV, KGLS…RVNI, LGRL…PIDI, NGST…ALDN, CNSP…DITI, CGNT…LMRE, NGPT…NVQY, and LPYE…LKNK.

In Fowlpox virus (strain NVSL) (FPV), this protein is Putative ankyrin repeat protein FPV218.